The following is a 399-amino-acid chain: Sister chromatid cohesion protein DCC1 (399 aa).

It belongs to the DCC1 family. Component of the CTF18-RFC complex which consists of CTF8, CTF18, DSCC1 and the RFC complex. Interacts with CTF8 and CTF18. Interacts with DDX11.

It is found in the nucleus. In terms of biological role, loads PCNA onto primed templates regulating velocity, spacing and restart activity of replication forks. May couple DNA replication to sister chromatid cohesion through regulation of the acetylation of the cohesin subunit SMC3. This Mus musculus (Mouse) protein is Sister chromatid cohesion protein DCC1 (DSCC1).